Here is a 461-residue protein sequence, read N- to C-terminus: Photosystem II CP43 reaction center protein (461 aa).

The propeptide occupies 1 to 2 (ME). Residue T3 is modified to N-acetylthreonine. T3 carries the post-translational modification Phosphothreonine. 5 helical membrane passes run 57-81 (LFEV…PHLA), 122-143 (LLGP…KDRN), 166-188 (KALY…RKIT), 243-263 (KPFA…LSYS), and 279-300 (WFNN…ASQA). Position 355 (E355) interacts with [CaMn4O5] cluster. Residues 435–459 (RARAAAAGFEKGIDRDLEPVLSMTP) form a helical membrane-spanning segment.

Belongs to the PsbB/PsbC family. PsbC subfamily. In terms of assembly, PSII is composed of 1 copy each of membrane proteins PsbA, PsbB, PsbC, PsbD, PsbE, PsbF, PsbH, PsbI, PsbJ, PsbK, PsbL, PsbM, PsbT, PsbX, PsbY, PsbZ, Psb30/Ycf12, at least 3 peripheral proteins of the oxygen-evolving complex and a large number of cofactors. It forms dimeric complexes. Requires Binds multiple chlorophylls and provides some of the ligands for the Ca-4Mn-5O cluster of the oxygen-evolving complex. It may also provide a ligand for a Cl- that is required for oxygen evolution. PSII binds additional chlorophylls, carotenoids and specific lipids. as cofactor.

Its subcellular location is the plastid. The protein localises to the chloroplast thylakoid membrane. Functionally, one of the components of the core complex of photosystem II (PSII). It binds chlorophyll and helps catalyze the primary light-induced photochemical processes of PSII. PSII is a light-driven water:plastoquinone oxidoreductase, using light energy to abstract electrons from H(2)O, generating O(2) and a proton gradient subsequently used for ATP formation. This is Photosystem II CP43 reaction center protein from Ceratophyllum demersum (Rigid hornwort).